The sequence spans 301 residues: GTP cyclohydrolase FolE2 (301 aa).

The protein belongs to the GTP cyclohydrolase IV family.

It carries out the reaction GTP + H2O = 7,8-dihydroneopterin 3'-triphosphate + formate + H(+). It functions in the pathway cofactor biosynthesis; 7,8-dihydroneopterin triphosphate biosynthesis; 7,8-dihydroneopterin triphosphate from GTP: step 1/1. Converts GTP to 7,8-dihydroneopterin triphosphate. This is GTP cyclohydrolase FolE2 from Exiguobacterium sibiricum (strain DSM 17290 / CCUG 55495 / CIP 109462 / JCM 13490 / 255-15).